We begin with the raw amino-acid sequence, 569 residues long: Urease subunit beta (569 aa).

One can recognise a Urease domain in the interval 131–569 (GGIDTHIHFI…VSLAQLFSIF (439 aa)). Residues His136, His138, and Lys219 each coordinate Ni(2+). The residue at position 219 (Lys219) is an N6-carboxylysine. His221 contributes to the substrate binding site. His248 and His274 together coordinate Ni(2+). The active-site Proton donor is the His322. Residue Asp362 participates in Ni(2+) binding.

This sequence belongs to the metallo-dependent hydrolases superfamily. Urease alpha subunit family. Heterohexamer of 3 UreA (alpha) and 3 UreB (beta) subunits. Ni cation serves as cofactor. Carboxylation allows a single lysine to coordinate two nickel ions.

The protein localises to the cytoplasm. The enzyme catalyses urea + 2 H2O + H(+) = hydrogencarbonate + 2 NH4(+). It participates in nitrogen metabolism; urea degradation; CO(2) and NH(3) from urea (urease route): step 1/1. The polypeptide is Urease subunit beta (Helicobacter pylori (strain HPAG1)).